Here is a 351-residue protein sequence, read N- to C-terminus: N-terminal EF-hand calcium-binding protein 1 (351 aa).

Ser-4 carries the post-translational modification Phosphoserine. 2 EF-hand domains span residues 26–61 (KGMS…GVLS) and 60–95 (LSGE…HLGE). Ca(2+) is bound by residues Asp-39, Asn-41, Asp-43, Lys-45, and Glu-50. The stretch at 135 to 163 (LLKETLNQLQSLQNSLECAMETTEEQTRQ) forms a coiled coil. Residues 180 to 203 (GKRSSRRVQRHNSFSPNSPQFNVS) form a disordered region. A compositionally biased stretch (polar residues) spans 190 to 202 (HNSFSPNSPQFNV). Phosphoserine occurs at positions 192 and 197. Residues 209 to 275 (EEDNQWMTQI…EEFQLALKHY (67 aa)) adopt a coiled-coil conformation. Residues 252-340 (MLVQRQMSVI…LETPELTSTM (89 aa)) form the ABM domain.

As to quaternary structure, interacts with STX1. May interact with CPNE6. In terms of tissue distribution, expressed in brain (at protein level).

The protein resides in the cytoplasm. This is N-terminal EF-hand calcium-binding protein 1 (NECAB1) from Homo sapiens (Human).